Consider the following 217-residue polypeptide: T-complex protein 10A homolog 1 (217 aa).

The disordered stretch occupies residues 1 to 26 (MLAGQLEARDPKEGTHPEDPCPGAGA). The segment covering 7–19 (EARDPKEGTHPED) has biased composition (basic and acidic residues). The stretch at 69–110 (ADVHGKLRSHIDALREQNMELREKLRALQLQRWKARKKSAAS) forms a coiled coil. The tract at residues 75–96 (LRSHIDALREQNMELREKLRAL) is leucine-zipper. Residues 175-192 (ERISSWKTPPQEKRDKSL) show a composition bias toward basic and acidic residues. Residues 175–217 (ERISSWKTPPQEKRDKSLSRRRQDRRATPTGRPTPCAERRGGV) form a disordered region.

This sequence belongs to the TCP10 family. As to quaternary structure, self-associates (via leucine zipper). Interacts (via leucine zipper) with ZIPK/DAPK3 (via leucine zipper). Interacts with MAD4.

It localises to the nucleus. In terms of biological role, may be involved in transcriptional regulation. Has in vitro transcription inhibition activity. In Pan troglodytes (Chimpanzee), this protein is T-complex protein 10A homolog 1 (TCP10L).